The primary structure comprises 412 residues: Class E basic helix-loop-helix protein 40 (412 aa).

Residues 1–21 (MERIPSAQPPPTCLPKAPGLE) form a disordered region. Residues 1–139 (MERIPSAQPP…LSGRNVEAGQ (139 aa)) are essential for interaction with BMAL1, E-box binding and repressor activity against the CLOCK-BMAL1 heterodimer. Positions 52 to 107 (TYKLPHRLIEKKRRDRINECIAQLKDLLPEHLKLTTLGHLEKAVVLELTLKHVKAL) constitute a bHLH domain. A necessary for interaction with RXRA and repressor activity against RXRA region spans residues 75-79 (LKDLL). The region spanning 142-175 (FCSGFQTCAREVLQYLAKHENTRDLKSSQLVTHL) is the Orange domain. Lys159 participates in a covalent cross-link: Glycyl lysine isopeptide (Lys-Gly) (interchain with G-Cter in SUMO1, SUMO2 and SUMO3). Residue Lys167 forms a Glycyl lysine isopeptide (Lys-Gly) (interchain with G-Cter in SUMO2) linkage. Disordered regions lie at residues 182 to 256 (LLQG…ELRV) and 279 to 298 (KQES…SDDE). Ser235 is subject to Phosphoserine. A Glycyl lysine isopeptide (Lys-Gly) (interchain with G-Cter in SUMO1); alternate cross-link involves residue Lys279. Residue Lys279 forms a Glycyl lysine isopeptide (Lys-Gly) (interchain with G-Cter in SUMO1, SUMO2 and SUMO3); alternate linkage. Residue Lys279 forms a Glycyl lysine isopeptide (Lys-Gly) (interchain with G-Cter in SUMO2); alternate linkage. Lys288 is covalently cross-linked (Glycyl lysine isopeptide (Lys-Gly) (interchain with G-Cter in SUMO2)). Ser383 carries the post-translational modification Phosphoserine.

As to quaternary structure, homodimer. Heterodimer with BHLHE41/DEC2. Interacts with TCF3/E47. Interacts with ubiquitin-conjugating enzyme UBE2I/UBC9. Interacts with HDAC1, SUMO1, RXRA and BMAL1. In terms of processing, ubiquitinated; which may lead to proteasomal degradation. Sumoylation inhibits its ubiquitination and promotes its negative regulation of the CLOCK-BMAL1 heterodimer transcriptional activator activity.

It is found in the cytoplasm. The protein localises to the nucleus. In terms of biological role, transcriptional repressor involved in the regulation of the circadian rhythm by negatively regulating the activity of the clock genes and clock-controlled genes. Acts as the negative limb of a novel autoregulatory feedback loop (DEC loop) which differs from the one formed by the PER and CRY transcriptional repressors (PER/CRY loop). Both these loops are interlocked as it represses the expression of PER1/2 and in turn is repressed by PER1/2 and CRY1/2. Represses the activity of the circadian transcriptional activator: CLOCK-BMAL1|BMAL2 heterodimer by competing for the binding to E-box elements (5'-CACGTG-3') found within the promoters of its target genes. Negatively regulates its own expression and the expression of DBP and BHLHE41/DEC2. Acts as a corepressor of RXR and the RXR-LXR heterodimers and represses the ligand-induced RXRA and NR1H3/LXRA transactivation activity. May be involved in the regulation of chondrocyte differentiation via the cAMP pathway. Represses the transcription of NR0B2 and attentuates the transactivation of NR0B2 by the CLOCK-BMAL1 complex. Drives the circadian rhythm of blood pressure through transcriptional repression of ATP1B1 in the cardiovascular system. The chain is Class E basic helix-loop-helix protein 40 (BHLHE40) from Bos taurus (Bovine).